The chain runs to 218 residues: ATP phosphoribosyltransferase (218 aa).

It belongs to the ATP phosphoribosyltransferase family. Short subfamily. Heteromultimer composed of HisG and HisZ subunits.

It localises to the cytoplasm. The catalysed reaction is 1-(5-phospho-beta-D-ribosyl)-ATP + diphosphate = 5-phospho-alpha-D-ribose 1-diphosphate + ATP. It functions in the pathway amino-acid biosynthesis; L-histidine biosynthesis; L-histidine from 5-phospho-alpha-D-ribose 1-diphosphate: step 1/9. Functionally, catalyzes the condensation of ATP and 5-phosphoribose 1-diphosphate to form N'-(5'-phosphoribosyl)-ATP (PR-ATP). Has a crucial role in the pathway because the rate of histidine biosynthesis seems to be controlled primarily by regulation of HisG enzymatic activity. This chain is ATP phosphoribosyltransferase, found in Acaryochloris marina (strain MBIC 11017).